The following is a 593-amino-acid chain: Numb-related protein 1 (593 aa).

4 disordered regions span residues 1 to 97 (MSAS…WQPD), 235 to 278 (TAQV…NSRS), 331 to 375 (LRQG…FGTQ), and 493 to 581 (MSMS…DPFD). Residue Ser17 is modified to Phosphoserine; by PKC. Over residues 27–37 (QNSLVSEQQPS) the composition is skewed to polar residues. Over residues 64–74 (RSLRLPKKRRD) the composition is skewed to basic residues. Ser65 is modified (phosphoserine; by PKC). Residues 102 to 255 (RTGTCCFNVK…STSSTPPKDI (154 aa)) form the PID domain. Composition is skewed to polar residues over residues 236-251 (AQVN…SSTP), 261-278 (EDNT…NSRS), and 354-364 (SLRTVSNNPTE). Over residues 493 to 511 (MSMSPTSPSSDPPSTSSYS) the composition is skewed to low complexity. The segment covering 516–528 (SGPPPAHAPPPLP) has biased composition (pro residues). Polar residues predominate over residues 532 to 565 (AVSNGSPSIYQQQLQQANSTRNSPAGINWNSSPN).

In terms of assembly, interacts with pkc-3. In terms of tissue distribution, expressed in cells comprising the intestine, pharyngeal cells, the anal sphincter and depressor muscles.

It is found in the cytoplasm. The protein resides in the cell cortex. Its subcellular location is the cytoskeleton. It localises to the membrane. In terms of biological role, involved in the tethering and targeting of pkc-3 to modulate the intracellular distribution of the kinase. The complex formed with pkc-3 complexes are likely to be involved in assembly, maintenance, and/or regulation of protein complexes that execute asymmetric and/or polarized cell functions. The chain is Numb-related protein 1 from Caenorhabditis elegans.